The primary structure comprises 113 residues: MQFSSAIILSAVAGSALATYANSTVTDIATTVVTITSCEENKCHETEVTTGVTTVTEVETTYTTYCPLPTAKAPVASTSNSTTTPPVSTAEGAAAANAVPAVAAGLLALGAFM.

An N-terminal signal peptide occupies residues 1–18 (MQFSSAIILSAVAGSALA). N22 and N80 each carry an N-linked (GlcNAc...) asparagine glycan. G92 carries GPI-anchor amidated glycine lipidation. Residues 93–113 (AAAANAVPAVAAGLLALGAFM) constitute a propeptide, removed in mature form.

Belongs to the HWP1 family. In terms of processing, N- and O-glycosylated. Post-translationally, the GPI-anchor is attached to the protein in the endoplasmic reticulum and serves to target the protein to the cell surface. There, the glucosamine-inositol phospholipid moiety is cleaved off and the GPI-modified mannoprotein is covalently attached via its lipidless GPI glycan remnant to the 1,6-beta-glucan of the outer cell wall layer.

The protein localises to the secreted. It localises to the cell wall. The protein resides in the membrane. In terms of biological role, cell wall protein necessary for cell wall integrity. Plays only a minor role in hyphal morphogenesis and is not critical to biofilm formation. The protein is Cell wall protein PGA59 (PGA59) of Candida albicans (strain SC5314 / ATCC MYA-2876) (Yeast).